A 261-amino-acid chain; its full sequence is Small ribosomal subunit protein eS1 (261 aa).

A compositionally biased stretch (basic residues) spans 1 to 18; it reads MAVGKNKRISKGKKGGKK. The segment at 1 to 22 is disordered; sequence MAVGKNKRISKGKKGGKKKAAD.

It belongs to the eukaryotic ribosomal protein eS1 family. As to quaternary structure, component of the small ribosomal subunit. Mature ribosomes consist of a small (40S) and a large (60S) subunit. The 40S subunit contains about 33 different proteins and 1 molecule of RNA (18S). The 60S subunit contains about 49 different proteins and 3 molecules of RNA (25S, 5.8S and 5S).

It localises to the cytoplasm. The protein is Small ribosomal subunit protein eS1 of Cicer arietinum (Chickpea).